A 440-amino-acid chain; its full sequence is Protein TENP (440 aa).

Expressed in developing retina and brain, but not in heart, liver or kidney. In brain, located in a narrow strip in the boundary between the ventricular zone (consisting of proliferating cells) and the intermediate zone (consisting of postmitotic, differentiating cells). Expressed in all major regions of the developing brain, including the myelencephalon, the mesencephalon, the telencephalon and the diencephalon. In the developing retina, expression is scattered across the retinal neural epithelium. Expressed in egg white (at protein level). Expressed in the magnum of the oviduct (at protein level).

In terms of biological role, may play a role in the developmental transition from cell proliferation to cell differentiation during neurogenesis. This Gallus gallus (Chicken) protein is Protein TENP (TENP).